A 136-amino-acid chain; its full sequence is MLQPKRTKFRKVMTGRNRGLAKGTEVSFGEFGLKAVGRGRLTARQIEAARRAMTRHVKRQGQIWIRVFPDKPITEKPLEVRQGKGKGNVEYWVAQIQPGKVMYEMNGVPEELAREAFRLAARKLPIKTTFVTKQVM.

The protein belongs to the universal ribosomal protein uL16 family. In terms of assembly, part of the 50S ribosomal subunit.

Binds 23S rRNA and is also seen to make contacts with the A and possibly P site tRNAs. In Aliivibrio salmonicida (strain LFI1238) (Vibrio salmonicida (strain LFI1238)), this protein is Large ribosomal subunit protein uL16.